Here is a 276-residue protein sequence, read N- to C-terminus: Urease accessory protein UreD (276 aa).

The protein belongs to the UreD family. As to quaternary structure, ureD, UreF and UreG form a complex that acts as a GTP-hydrolysis-dependent molecular chaperone, activating the urease apoprotein by helping to assemble the nickel containing metallocenter of UreC. The UreE protein probably delivers the nickel.

The protein resides in the cytoplasm. Required for maturation of urease via the functional incorporation of the urease nickel metallocenter. This Bradyrhizobium diazoefficiens (strain JCM 10833 / BCRC 13528 / IAM 13628 / NBRC 14792 / USDA 110) protein is Urease accessory protein UreD.